The primary structure comprises 299 residues: uncharacterized protein (299 aa).

The chain crosses the membrane as a helical span at residues 4–20 (LFFIFVMLIVLLCGCTS).

It localises to the membrane. This is an uncharacterized protein from Methanocaldococcus jannaschii (strain ATCC 43067 / DSM 2661 / JAL-1 / JCM 10045 / NBRC 100440) (Methanococcus jannaschii).